A 483-amino-acid polypeptide reads, in one-letter code: Probable 4-aminobutyrate aminotransferase, mitochondrial (483 aa).

Position 148-149 (Gly-148–Thr-149) interacts with pyridoxal 5'-phosphate. Residue Arg-204 coordinates substrate. An N6-(pyridoxal phosphate)lysine modification is found at Lys-341. Residue Thr-365 coordinates pyridoxal 5'-phosphate.

Belongs to the class-III pyridoxal-phosphate-dependent aminotransferase family. Homodimer. It depends on pyridoxal 5'-phosphate as a cofactor.

Its subcellular location is the mitochondrion matrix. The enzyme catalyses 4-aminobutanoate + 2-oxoglutarate = succinate semialdehyde + L-glutamate. It catalyses the reaction (S)-3-amino-2-methylpropanoate + 2-oxoglutarate = 2-methyl-3-oxopropanoate + L-glutamate. This Caenorhabditis elegans protein is Probable 4-aminobutyrate aminotransferase, mitochondrial (gta-1).